A 260-amino-acid polypeptide reads, in one-letter code: Ribonuclease HII (260 aa).

Residues 73-260 (LHIAGIDEAG…APVQQQLDIV (188 aa)) form the RNase H type-2 domain. A divalent metal cation-binding residues include Asp79, Glu80, and Asp171.

It belongs to the RNase HII family. Requires Mn(2+) as cofactor. The cofactor is Mg(2+).

It localises to the cytoplasm. It carries out the reaction Endonucleolytic cleavage to 5'-phosphomonoester.. Endonuclease that specifically degrades the RNA of RNA-DNA hybrids. The polypeptide is Ribonuclease HII (Desulfitobacterium hafniense (strain DSM 10664 / DCB-2)).